The sequence spans 178 residues: Caveolin-1 (178 aa).

Ser-2 carries the N-acetylserine modification. Position 2 is a phosphoserine (Ser-2). The tract at residues 2–94 (SGGKYVDSEG…WKASFTTFTV (93 aa)) is required for homooligomerization. The Cytoplasmic portion of the chain corresponds to 2–104 (SGGKYVDSEG…TKYWFYRLLS (103 aa)). N6-acetyllysine; alternate is present on Lys-5. Lys-5 participates in a covalent cross-link: Glycyl lysine isopeptide (Lys-Gly) (interchain with G-Cter in ubiquitin); alternate. Tyr-6 is modified (phosphotyrosine). At Ser-9 the chain carries Phosphoserine. The residue at position 14 (Tyr-14) is a Phosphotyrosine; by ABL1. At Tyr-25 the chain carries Phosphotyrosine. Residues Lys-26, Lys-30, Lys-39, Lys-47, and Lys-57 each participate in a glycyl lysine isopeptide (Lys-Gly) (interchain with G-Cter in ubiquitin) cross-link. The segment at 82–94 (DGIWKASFTTFTV) is interaction with CAVIN3. Residues 105–125 (ALFGIPMALIWGIYFAILSFL) constitute an intramembrane region (helical). Topologically, residues 126-178 (HIWAVVPCIKSFLIEIQCISRVYSIYVHTFCDPLFEAIGKIFSNIRINMQKEI) are cytoplasmic. Residues 131–142 (VPCIKSFLIEIQ) are interacts with SPRY1, SPRY2, SPRY3 and SPRY4. S-palmitoyl cysteine attachment occurs at residues Cys-133, Cys-143, and Cys-156. Residues 149–160 (SIYVHTFCDPLF) form an interacts with SPRY1, SPRY2, and SPRY4 region. Residues 167–178 (FSNIRINMQKEI) form an interacts with SPRY1, SPRY2, SPRY3 and SPRY4 region.

This sequence belongs to the caveolin family. As to quaternary structure, homooligomer. Interacts with GLIPR2. Interacts with NOSTRIN. Interacts with SNAP25 and STX1A. Interacts (via the N-terminus) with DPP4; the interaction is direct. Interacts with CTNNB1, CDH1 and JUP. Interacts with PACSIN2; this interaction induces membrane tubulation. Interacts with SLC7A9. Interacts with BMX and BTK. Interacts with TGFBR1. Interacts with CAVIN3 (via leucine-zipper domain) in a cholesterol-sensitive manner. Interacts with CAVIN1. Interacts with EHD2 in a cholesterol-dependent manner. Forms a ternary complex with UBXN6 and VCP; mediates CAV1 targeting to lysosomes for degradation. Interacts with ABCG1; this interaction regulates ABCG1-mediated cholesterol efflux. Interacts with NEU3; this interaction enhances NEU3 sialidase activity within caveola. Interacts (via C-terminus) with SPRY1, SPRY2 (via C-terminus), SPRY3, and SPRY4. Interacts with IGFBP5; this interaction allows trafficking of IGFBP5 from the plasma membrane to the nucleus. Phosphorylated at Tyr-14 by ABL1 in response to oxidative stress. In terms of processing, ubiquitinated. Undergo monoubiquitination and multi- and/or polyubiquitination. Monoubiquitination of N-terminal lysines promotes integration in a ternary complex with UBXN6 and VCP which promotes oligomeric CAV1 targeting to lysosomes for degradation. Ubiquitinated by ZNRF1; leading to degradation and modulation of the TLR4-mediated immune response.

The protein resides in the golgi apparatus membrane. Its subcellular location is the cell membrane. The protein localises to the membrane. It localises to the caveola. It is found in the membrane raft. Its function is as follows. May act as a scaffolding protein within caveolar membranes. Forms a stable heterooligomeric complex with CAV2 that targets to lipid rafts and drives caveolae formation. Mediates the recruitment of CAVIN proteins (CAVIN1/2/3/4) to the caveolae. Interacts directly with G-protein alpha subunits and can functionally regulate their activity. Involved in the costimulatory signal essential for T-cell receptor (TCR)-mediated T-cell activation. Its binding to DPP4 induces T-cell proliferation and NF-kappa-B activation in a T-cell receptor/CD3-dependent manner. Recruits CTNNB1 to caveolar membranes and may regulate CTNNB1-mediated signaling through the Wnt pathway. Negatively regulates TGFB1-mediated activation of SMAD2/3 by mediating the internalization of TGFBR1 from membrane rafts leading to its subsequent degradation. Binds 20(S)-hydroxycholesterol (20(S)-OHC). This Muntiacus reevesi (Reeves' muntjac) protein is Caveolin-1 (CAV1).